A 3563-amino-acid polypeptide reads, in one-letter code: D-lysergyl-peptide-synthetase subunit 1 (3563 aa).

Residues 307 to 706 (SCSPRPNPQA…LGRKDDQVKI (400 aa)) are adenylation (A) domain 1. In terms of domain architecture, Carrier 1 spans 844 to 921 (EPKSDREKLL…EIVIVSTSAT (78 aa)). Ser-881 bears the O-(pantetheine 4'-phosphoryl)serine mark. The condensation (C) domain 1 stretch occupies residues 963-1354 (EDIYPCTHLQ…EHILTEIHSN (392 aa)). The interval 1397-1804 (QEKCQAQPDA…RRKDAQVKIR (408 aa)) is adenylation (A) domain 2. One can recognise a Carrier 2 domain in the interval 1944–2020 (PPSNATEHEI…KLALARGVTQ (77 aa)). Ser-1981 bears the O-(pantetheine 4'-phosphoryl)serine mark. The condensation (C) domain 2 stretch occupies residues 2067–2486 (ERIYPCSPIQ…ALPVLDEDQM (420 aa)). An adenylation (A) domain 3 region spans residues 2511 to 2909 (QCIRCPDSPS…GRNDDQVKVR (399 aa)). A Carrier 3 domain is found at 3025–3104 (PPRTALEAEL…RFGSYRRAGA (80 aa)). O-(pantetheine 4'-phosphoryl)serine is present on Ser-3064. A cyclization (Cyc) domain region spans residues 3166 to 3451 (LYFSKPMASE…VAKSTTWSSD (286 aa)).

The protein belongs to the NRP synthetase family.

It functions in the pathway alkaloid biosynthesis; ergot alkaloid biosynthesis. In terms of biological role, D-lysergyl-peptide-synthetase subunit 1; part of the gene cluster that mediates the biosynthesis of fungal ergot alkaloid. DmaW catalyzes the first step of ergot alkaloid biosynthesis by condensing dimethylallyl diphosphate (DMAP) and tryptophan to form 4-dimethylallyl-L-tryptophan. The second step is catalyzed by the methyltransferase easF that methylates 4-dimethylallyl-L-tryptophan in the presence of S-adenosyl-L-methionine, resulting in the formation of 4-dimethylallyl-L-abrine. The catalase easC and the FAD-dependent oxidoreductase easE then transform 4-dimethylallyl-L-abrine to chanoclavine-I which is further oxidized by easD in the presence of NAD(+), resulting in the formation of chanoclavine-I aldehyde. Agroclavine dehydrogenase easG then mediates the conversion of chanoclavine-I aldehyde to agroclavine via a non-enzymatic adduct reaction: the substrate is an iminium intermediate that is formed spontaneously from chanoclavine-I aldehyde in the presence of glutathione. The presence of easA is not required to complete this reaction. Further conversion of agroclavine to paspalic acid is a two-step process involving oxidation of agroclavine to elymoclavine and of elymoclavine to paspalic acid, the second step being performed by the elymoclavine oxidase cloA. Paspalic acid is then further converted to D-lysergic acid. Ergopeptines are assembled from D-lysergic acid and three different amino acids by the D-lysergyl-peptide-synthetases composed each of a monomudular and a trimodular nonribosomal peptide synthetase subunit. LpsB and lpsC encode the monomodular subunits responsible for D-lysergic acid activation and incorporation into the ergopeptine backbone. LpsA1 and A2 subunits encode the trimodular nonribosomal peptide synthetase assembling the tripeptide portion of ergopeptines. LpsA1 is responsible for formation of the major ergopeptine, ergotamine, and lpsA2 for alpha-ergocryptine, the minor ergopeptine of the total alkaloid mixture elaborated by C.purpurea. D-lysergyl-tripeptides are assembled by the nonribosomal peptide synthetases and released as N-(D-lysergyl-aminoacyl)-lactams. Cyclolization of the D-lysergyl-tripeptides is performed by the Fe(2+)/2-ketoglutarate-dependent dioxygenase easH which introduces a hydroxyl group into N-(D-lysergyl-aminoacyl)-lactam at alpha-C of the aminoacyl residue followed by spontaneous condensation with the terminal lactam carbonyl group. The chain is D-lysergyl-peptide-synthetase subunit 1 from Claviceps purpurea (Ergot fungus).